The following is a 1330-amino-acid chain: ABC multidrug transporter mdr4 (1330 aa).

Asparagine 3 is a glycosylation site (N-linked (GlcNAc...) asparagine). The next 6 helical transmembrane spans lie at 90 to 110, 144 to 164, 218 to 238, 243 to 263, 324 to 344, and 370 to 390; these read VLLI…FPLL, VLYV…HSTC, KVGL…VAFI, IAGM…GGGH, HAAQ…LAFW, and IFVL…IHVF. Residues 94-392 enclose the ABC transmembrane type-1 1 domain; the sequence is IGGLLFAICA…VAPFIHVFAS (299 aa). The ABC transporter 1 domain occupies 428-666; the sequence is IRFRDVHFKY…GGVYAEMVRL (239 aa). An ATP-binding site is contributed by 463 to 470; it reads GPSGGGKS. A glycan (N-linked (GlcNAc...) asparagine) is linked at asparagine 707. The tract at residues 717–736 is disordered; the sequence is VADTPSDSRDGSEEEARKKR. A compositionally biased stretch (basic and acidic residues) spans 722-733; that stretch reads SDSRDGSEEEAR. A run of 6 helical transmembrane segments spans residues 761–781, 806–826, 871–893, 903–923, 989–1009, and 1023–1043; these read LLGL…AIVF, LLFF…GCAF, ASAL…VNLI, AWKI…SGMM, AWLA…YWWG, and FFIV…MFAL. The ABC transmembrane type-1 2 domain maps to 761–1049; sequence LLGLAMSVII…MFALAPDISK (289 aa). One can recognise an ABC transporter 2 domain in the interval 1086 to 1325; sequence AQLRDVHFTY…SETYRTSVIH (240 aa). 1121 to 1128 lines the ATP pocket; sequence GPSGSGKS.

The protein belongs to the ABC transporter superfamily. ABCB family. Multidrug resistance exporter (TC 3.A.1.201) subfamily.

It localises to the cell membrane. It catalyses the reaction itraconazole(in) + ATP + H2O = itraconazole(out) + ADP + phosphate + H(+). The enzyme catalyses voriconazole(in) + ATP + H2O = voriconazole(out) + ADP + phosphate + H(+). In terms of biological role, pleiotropic ABC efflux transporter that confers resistance to azoles such as itraconazole and voriconazole. The chain is ABC multidrug transporter mdr4 from Aspergillus fumigatus (strain ATCC MYA-4609 / CBS 101355 / FGSC A1100 / Af293) (Neosartorya fumigata).